A 250-amino-acid polypeptide reads, in one-letter code: Pimeloyl-[acyl-carrier protein] methyl ester esterase (250 aa).

Residues Trp12, 71-72 (SL), and 138-142 (FVALQ) each bind substrate. Residue Ser71 is the Nucleophile of the active site. Active-site residues include Asp202 and His230. Substrate is bound at residue His230.

Belongs to the AB hydrolase superfamily. Carboxylesterase BioH family. Monomer.

It localises to the cytoplasm. The enzyme catalyses 6-carboxyhexanoyl-[ACP] methyl ester + H2O = 6-carboxyhexanoyl-[ACP] + methanol + H(+). It participates in cofactor biosynthesis; biotin biosynthesis. The physiological role of BioH is to remove the methyl group introduced by BioC when the pimeloyl moiety is complete. It allows to synthesize pimeloyl-ACP via the fatty acid synthetic pathway through the hydrolysis of the ester bonds of pimeloyl-ACP esters. This chain is Pimeloyl-[acyl-carrier protein] methyl ester esterase, found in Aromatoleum aromaticum (strain DSM 19018 / LMG 30748 / EbN1) (Azoarcus sp. (strain EbN1)).